The chain runs to 297 residues: Ribosomal RNA small subunit methyltransferase H (297 aa).

S-adenosyl-L-methionine contacts are provided by residues 37-39, glutamate 56, phenylalanine 87, aspartate 102, and histidine 109; that span reads GGH.

Belongs to the methyltransferase superfamily. RsmH family.

It localises to the cytoplasm. The enzyme catalyses cytidine(1402) in 16S rRNA + S-adenosyl-L-methionine = N(4)-methylcytidine(1402) in 16S rRNA + S-adenosyl-L-homocysteine + H(+). Its function is as follows. Specifically methylates the N4 position of cytidine in position 1402 (C1402) of 16S rRNA. The protein is Ribosomal RNA small subunit methyltransferase H of Borrelia duttonii (strain Ly).